The primary structure comprises 424 residues: UDP-N-acetylglucosamine 1-carboxyvinyltransferase 3 (424 aa).

A phosphoenolpyruvate-binding site is contributed by 22 to 23 (KN). Arg-94 lines the UDP-N-acetyl-alpha-D-glucosamine pocket. Catalysis depends on Asp-118, which acts as the Proton donor. Residues 123–127 (RPVDQ), Asp-306, and Leu-328 contribute to the UDP-N-acetyl-alpha-D-glucosamine site.

The protein belongs to the EPSP synthase family. MurA subfamily.

It is found in the cytoplasm. It catalyses the reaction phosphoenolpyruvate + UDP-N-acetyl-alpha-D-glucosamine = UDP-N-acetyl-3-O-(1-carboxyvinyl)-alpha-D-glucosamine + phosphate. Its pathway is cell wall biogenesis; peptidoglycan biosynthesis. Cell wall formation. Adds enolpyruvyl to UDP-N-acetylglucosamine. The sequence is that of UDP-N-acetylglucosamine 1-carboxyvinyltransferase 3 from Symbiobacterium thermophilum (strain DSM 24528 / JCM 14929 / IAM 14863 / T).